A 425-amino-acid chain; its full sequence is Histidine--tRNA ligase (425 aa).

Belongs to the class-II aminoacyl-tRNA synthetase family. Homodimer.

The protein resides in the cytoplasm. The catalysed reaction is tRNA(His) + L-histidine + ATP = L-histidyl-tRNA(His) + AMP + diphosphate + H(+). The sequence is that of Histidine--tRNA ligase from Shewanella sp. (strain MR-7).